The chain runs to 152 residues: SsrA-binding protein (152 aa).

It belongs to the SmpB family.

The protein resides in the cytoplasm. In terms of biological role, required for rescue of stalled ribosomes mediated by trans-translation. Binds to transfer-messenger RNA (tmRNA), required for stable association of tmRNA with ribosomes. tmRNA and SmpB together mimic tRNA shape, replacing the anticodon stem-loop with SmpB. tmRNA is encoded by the ssrA gene; the 2 termini fold to resemble tRNA(Ala) and it encodes a 'tag peptide', a short internal open reading frame. During trans-translation Ala-aminoacylated tmRNA acts like a tRNA, entering the A-site of stalled ribosomes, displacing the stalled mRNA. The ribosome then switches to translate the ORF on the tmRNA; the nascent peptide is terminated with the 'tag peptide' encoded by the tmRNA and targeted for degradation. The ribosome is freed to recommence translation, which seems to be the essential function of trans-translation. The polypeptide is SsrA-binding protein (Rickettsia canadensis (strain McKiel)).